Reading from the N-terminus, the 256-residue chain is Pyridoxine 5'-phosphate synthase (256 aa).

Residues Asn8 and Arg19 each contribute to the 3-amino-2-oxopropyl phosphate site. His44 serves as the catalytic Proton acceptor. Arg46 and His51 together coordinate 1-deoxy-D-xylulose 5-phosphate. Catalysis depends on Glu74, which acts as the Proton acceptor. Thr111 lines the 1-deoxy-D-xylulose 5-phosphate pocket. His202 acts as the Proton donor in catalysis. Residues Asp203 and 225–226 (GH) contribute to the 3-amino-2-oxopropyl phosphate site.

Belongs to the PNP synthase family. In terms of assembly, homooctamer; tetramer of dimers.

The protein resides in the cytoplasm. The enzyme catalyses 3-amino-2-oxopropyl phosphate + 1-deoxy-D-xylulose 5-phosphate = pyridoxine 5'-phosphate + phosphate + 2 H2O + H(+). It participates in cofactor biosynthesis; pyridoxine 5'-phosphate biosynthesis; pyridoxine 5'-phosphate from D-erythrose 4-phosphate: step 5/5. In terms of biological role, catalyzes the complicated ring closure reaction between the two acyclic compounds 1-deoxy-D-xylulose-5-phosphate (DXP) and 3-amino-2-oxopropyl phosphate (1-amino-acetone-3-phosphate or AAP) to form pyridoxine 5'-phosphate (PNP) and inorganic phosphate. The protein is Pyridoxine 5'-phosphate synthase of Xanthomonas campestris pv. campestris (strain 8004).